An 83-amino-acid polypeptide reads, in one-letter code: Large ribosomal subunit protein bL31B (83 aa).

Belongs to the bacterial ribosomal protein bL31 family. Type B subfamily. As to quaternary structure, part of the 50S ribosomal subunit.

In Levilactobacillus brevis (strain ATCC 367 / BCRC 12310 / CIP 105137 / JCM 1170 / LMG 11437 / NCIMB 947 / NCTC 947) (Lactobacillus brevis), this protein is Large ribosomal subunit protein bL31B.